A 173-amino-acid polypeptide reads, in one-letter code: Crossover junction endodeoxyribonuclease RuvC (173 aa).

Residues Asp-8, Glu-67, and Asp-139 contribute to the active site. Residues Asp-8, Glu-67, and Asp-139 each contribute to the Mg(2+) site.

Belongs to the RuvC family. In terms of assembly, homodimer which binds Holliday junction (HJ) DNA. The HJ becomes 2-fold symmetrical on binding to RuvC with unstacked arms; it has a different conformation from HJ DNA in complex with RuvA. In the full resolvosome a probable DNA-RuvA(4)-RuvB(12)-RuvC(2) complex forms which resolves the HJ. Requires Mg(2+) as cofactor.

It is found in the cytoplasm. It carries out the reaction Endonucleolytic cleavage at a junction such as a reciprocal single-stranded crossover between two homologous DNA duplexes (Holliday junction).. In terms of biological role, the RuvA-RuvB-RuvC complex processes Holliday junction (HJ) DNA during genetic recombination and DNA repair. Endonuclease that resolves HJ intermediates. Cleaves cruciform DNA by making single-stranded nicks across the HJ at symmetrical positions within the homologous arms, yielding a 5'-phosphate and a 3'-hydroxyl group; requires a central core of homology in the junction. The consensus cleavage sequence is 5'-(A/T)TT(C/G)-3'. Cleavage occurs on the 3'-side of the TT dinucleotide at the point of strand exchange. HJ branch migration catalyzed by RuvA-RuvB allows RuvC to scan DNA until it finds its consensus sequence, where it cleaves and resolves the cruciform DNA. The polypeptide is Crossover junction endodeoxyribonuclease RuvC (Shewanella sp. (strain ANA-3)).